We begin with the raw amino-acid sequence, 132 residues long: Nitrogenase iron-iron protein delta chain (132 aa).

In terms of assembly, hexamer of two alpha, two beta, and two delta chains. Requires iron-sulfur cluster as cofactor.

It carries out the reaction N2 + 8 reduced [2Fe-2S]-[ferredoxin] + 16 ATP + 16 H2O = H2 + 8 oxidized [2Fe-2S]-[ferredoxin] + 2 NH4(+) + 16 ADP + 16 phosphate + 6 H(+). In terms of biological role, the key enzymatic reactions in nitrogen fixation are catalyzed by the nitrogenase complex, which has 2 components: the iron protein (component 2) and a component 1 which is either a molybdenum-iron protein, a vanadium-iron, or an iron-iron protein. The polypeptide is Nitrogenase iron-iron protein delta chain (anfG) (Azotobacter vinelandii).